Reading from the N-terminus, the 344-residue chain is Methionine import ATP-binding protein MetN (344 aa).

The ABC transporter domain occupies leucine 2–valine 241. Glycine 38–serine 45 contacts ATP.

The protein belongs to the ABC transporter superfamily. Methionine importer (TC 3.A.1.24) family. In terms of assembly, the complex is composed of two ATP-binding proteins (MetN), two transmembrane proteins (MetI) and a solute-binding protein (MetQ).

Its subcellular location is the cell membrane. It carries out the reaction L-methionine(out) + ATP + H2O = L-methionine(in) + ADP + phosphate + H(+). It catalyses the reaction D-methionine(out) + ATP + H2O = D-methionine(in) + ADP + phosphate + H(+). Its function is as follows. Part of the ABC transporter complex MetNIQ involved in methionine import. Responsible for energy coupling to the transport system. The chain is Methionine import ATP-binding protein MetN from Latilactobacillus sakei subsp. sakei (strain 23K) (Lactobacillus sakei subsp. sakei).